We begin with the raw amino-acid sequence, 1331 residues long: Probable serine/threonine-protein kinase DDB_G0272254 (1331 aa).

Composition is skewed to low complexity over residues 1 to 42 (METS…NSSS), 96 to 116 (NDNN…NNNN), and 153 to 175 (TQQT…STPS). Disordered regions lie at residues 1–43 (METS…SSSA), 92–132 (DKIC…QQIS), and 150–175 (ILNT…STPS). The next 2 helical transmembrane spans lie at 201–221 (FGFS…IYIL) and 224–244 (FVLK…FVIY). Residues 259–287 (SINDSDSSSNNNNNNNNTTTTNNDSASTK) show a composition bias toward low complexity. Disordered stretches follow at residues 259 to 300 (SIND…PETY), 320 to 419 (NLNN…LSKE), 435 to 464 (SVGK…SHNI), and 512 to 581 (AHSN…VVGN). Residues 288 to 299 (GNNNNEISSPET) are compositionally biased toward polar residues. Polar residues predominate over residues 436–450 (VGKTHNRSSSGSDSI). Residues 514 to 531 (SNNNNNNNNSNTNNNNNN) show a composition bias toward low complexity. The segment covering 532 to 555 (QSVSAPVSQLATPVYQTPGTNSVV) has biased composition (polar residues). Residues 557–577 (NLENDNENNNDSFSDINDNNS) show a composition bias toward low complexity. Kelch repeat units follow at residues 665–710 (SLVL…NHDY), 716–769 (KFYL…RYGN), 770–816 (RFLL…GHTS), 822–868 (KLII…ELND), 909–959 (NIVM…LIKN), and 962–1008 (KLFI…NNNN). A compositionally biased stretch (low complexity) spans 834 to 860 (NNNNNNNNNNNNNNNNNNNNNNNNNNN). Positions 834-862 (NNNNNNNNNNNNNNNNNNNNNNNNNNNKG) are disordered. The interval 976–1042 (NNNSSSGGNN…NNNNNNNNNN (67 aa)) is disordered. The Protein kinase domain occupies 1073–1331 (IKIDKEIGKG…EITNYLTKTF (259 aa)). Residues 1079-1087 (IGKGHFSKV) and lysine 1100 contribute to the ATP site. Aspartate 1200 acts as the Proton acceptor in catalysis.

This sequence belongs to the protein kinase superfamily. TKL Ser/Thr protein kinase family.

The protein resides in the membrane. The enzyme catalyses L-seryl-[protein] + ATP = O-phospho-L-seryl-[protein] + ADP + H(+). It carries out the reaction L-threonyl-[protein] + ATP = O-phospho-L-threonyl-[protein] + ADP + H(+). The protein is Probable serine/threonine-protein kinase DDB_G0272254 of Dictyostelium discoideum (Social amoeba).